The primary structure comprises 347 residues: tRNA(Ile)-lysidine synthase (347 aa).

27–32 contributes to the ATP binding site; sequence SGGADS. A disordered region spans residues 243-263; the sequence is AAPASPSHVEGEASAPHDAAH.

It belongs to the tRNA(Ile)-lysidine synthase family.

Its subcellular location is the cytoplasm. The catalysed reaction is cytidine(34) in tRNA(Ile2) + L-lysine + ATP = lysidine(34) in tRNA(Ile2) + AMP + diphosphate + H(+). In terms of biological role, ligates lysine onto the cytidine present at position 34 of the AUA codon-specific tRNA(Ile) that contains the anticodon CAU, in an ATP-dependent manner. Cytidine is converted to lysidine, thus changing the amino acid specificity of the tRNA from methionine to isoleucine. This Nitratidesulfovibrio vulgaris (strain ATCC 29579 / DSM 644 / CCUG 34227 / NCIMB 8303 / VKM B-1760 / Hildenborough) (Desulfovibrio vulgaris) protein is tRNA(Ile)-lysidine synthase.